Here is a 304-residue protein sequence, read N- to C-terminus: Galactofuranosyltransferase GlfT1 (304 aa).

This sequence belongs to the glycosyltransferase 2 family. As to quaternary structure, is probably part of an AG biosynthetic complex.

It localises to the cell membrane. It is found in the secreted. Its subcellular location is the cell wall. The enzyme catalyses alpha-L-rhamnosyl-(1-&gt;3)-N-acetyl-alpha-D-glucosaminyl-diphospho-trans,octa-cis-decaprenol + 2 UDP-alpha-D-galactofuranose = beta-D-galactofuranosyl-(1-&gt;5)-beta-D-galactofuranosyl-(1-&gt;4)-alpha-L-rhamnosyl-(1-&gt;3)-N-acetyl-alpha-D-glucosaminyl-diphospho-trans,octa-cis-decaprenol + 2 UDP + 2 H(+). Its pathway is cell wall biogenesis; cell wall polysaccharide biosynthesis. In terms of biological role, involved in the biosynthesis of the arabinogalactan (AG) region of the mycolylarabinogalactan-peptidoglycan (mAGP) complex, an essential component of the mycobacterial cell wall. Catalyzes the transfer of the first two galactofuranosyl (Galf) units from UDP-galactofuranose (UDP-Galf) onto the rhamnosyl-GlcNAc-diphospho-decaprenol (Rha-GlcNAc-PP-C50) acceptor, yielding galactofuranosyl-galactofuranosyl-rhamnosyl-GlcNAc-diphospho-decaprenol (Galf-Galf-Rha-GlcNAc-PP-C50). Thus, GlfT1 is the initiator of galactan synthesis, while GlfT2 continues with the subsequent polymerization events. The protein is Galactofuranosyltransferase GlfT1 of Mycobacterium tuberculosis (strain CDC 1551 / Oshkosh).